A 569-amino-acid polypeptide reads, in one-letter code: Urease subunit alpha (569 aa).

Residues 131-569 (GGIDTHIHFI…LPLAQRYLLL (439 aa)) enclose the Urease domain. 3 residues coordinate Ni(2+): H136, H138, and K219. An N6-carboxylysine modification is found at K219. H221 is a binding site for substrate. Residues H248 and H274 each contribute to the Ni(2+) site. Catalysis depends on H322, which acts as the Proton donor. D362 contributes to the Ni(2+) binding site.

Belongs to the metallo-dependent hydrolases superfamily. Urease alpha subunit family. In terms of assembly, heterotrimer of UreA (gamma), UreB (beta) and UreC (alpha) subunits. Three heterotrimers associate to form the active enzyme. Ni cation serves as cofactor. Post-translationally, carboxylation allows a single lysine to coordinate two nickel ions.

It is found in the cytoplasm. The catalysed reaction is urea + 2 H2O + H(+) = hydrogencarbonate + 2 NH4(+). It functions in the pathway nitrogen metabolism; urea degradation; CO(2) and NH(3) from urea (urease route): step 1/1. This is Urease subunit alpha from Synechococcus sp. (strain CC9605).